A 131-amino-acid chain; its full sequence is Class I hydrophobin 9 (131 aa).

An N-terminal signal peptide occupies residues 1 to 23 (MFARRAISIFAFMLVALSIFAAA). 4 disulfides stabilise this stretch: Cys-52–Cys-112, Cys-59–Cys-106, Cys-60–Cys-93, and Cys-113–Cys-126. Asn-53 is a glycosylation site (N-linked (GlcNAc...) asparagine). An N-linked (GlcNAc...) asparagine glycan is attached at Asn-115.

Belongs to the fungal hydrophobin family. Self-assembles to form functional amyloid fibrils called rodlets. Self-assembly into fibrillar rodlets occurs spontaneously at hydrophobic:hydrophilic interfaces and the rodlets further associate laterally to form amphipathic monolayers.

The protein localises to the secreted. The protein resides in the cell wall. Its function is as follows. Aerial growth, conidiation, and dispersal of filamentous fungi in the environment rely upon a capability of their secreting small amphipathic proteins called hydrophobins (HPBs) with low sequence identity. Class I can self-assemble into an outermost layer of rodlet bundles on aerial cell surfaces, conferring cellular hydrophobicity that supports fungal growth, development and dispersal; whereas Class II form highly ordered films at water-air interfaces through intermolecular interactions but contribute nothing to the rodlet structure. This chain is Class I hydrophobin 9, found in Flammulina velutipes (Agaricus velutipes).